Reading from the N-terminus, the 301-residue chain is Acetyl-coenzyme A carboxylase carboxyl transferase subunit beta (301 aa).

One can recognise a CoA carboxyltransferase N-terminal domain in the interval 25 to 294 (LWIKDPSTGE…NSDAPEHEKT (270 aa)). Residues 282 to 301 (QPGNSDAPEHEKTEATDKAA) form a disordered region. The segment covering 288–301 (APEHEKTEATDKAA) has biased composition (basic and acidic residues).

Belongs to the AccD/PCCB family. Acetyl-CoA carboxylase is a heterohexamer composed of biotin carboxyl carrier protein (AccB), biotin carboxylase (AccC) and two subunits each of ACCase subunit alpha (AccA) and ACCase subunit beta (AccD).

The protein localises to the cytoplasm. It carries out the reaction N(6)-carboxybiotinyl-L-lysyl-[protein] + acetyl-CoA = N(6)-biotinyl-L-lysyl-[protein] + malonyl-CoA. It functions in the pathway lipid metabolism; malonyl-CoA biosynthesis; malonyl-CoA from acetyl-CoA: step 1/1. Its function is as follows. Component of the acetyl coenzyme A carboxylase (ACC) complex. Biotin carboxylase (BC) catalyzes the carboxylation of biotin on its carrier protein (BCCP) and then the CO(2) group is transferred by the transcarboxylase to acetyl-CoA to form malonyl-CoA. This is Acetyl-coenzyme A carboxylase carboxyl transferase subunit beta from Brucella anthropi (strain ATCC 49188 / DSM 6882 / CCUG 24695 / JCM 21032 / LMG 3331 / NBRC 15819 / NCTC 12168 / Alc 37) (Ochrobactrum anthropi).